Consider the following 706-residue polypeptide: Envelope glycoprotein H (706 aa).

Positions 1 to 18 are cleaved as a signal peptide; the sequence is MQLLCVFCLVLLWEVGAA. Topologically, residues 19–682 are virion surface; sequence SLSEVKLHLD…LYEERAHVVL (664 aa). N-linked (GlcNAc...) asparagine; by host glycosylation occurs at Asn60. The segment at 165 to 229 is interaction with gL; the sequence is DKFQYTGAMT…QSGDYSLVIV (65 aa). Cys278 and Cys335 are disulfide-bonded. Asn435 carries N-linked (GlcNAc...) asparagine; by host glycosylation. Disulfide bonds link Cys454/Cys478 and Cys534/Cys587. Residues Asn549 and Asn604 are each glycosylated (N-linked (GlcNAc...) asparagine; by host). Cys612 and Cys615 form a disulfide bridge. A glycan (N-linked (GlcNAc...) asparagine; by host) is linked at Asn664. The chain crosses the membrane as a helical span at residues 683-703; it reads AIILYFIAFALGIFLVHKIVM. Residues 704-706 lie on the Intravirion side of the membrane; the sequence is FFL.

This sequence belongs to the herpesviridae glycoprotein H family. Interacts with glycoprotein L (gL); this interaction is necessary for the correct processing and cell surface expression of gH. The heterodimer gH/gL seems to interact with gB trimers during fusion. The heterodimer gH/gL interacts with host EPHA2 to facilitate virus internalization and fusion. Interacts with glycoprotein 42/BZLF2. In terms of processing, N-glycosylated, O-glycosylated, and sialylated.

It localises to the virion membrane. It is found in the host cell membrane. Its subcellular location is the host endosome membrane. Functionally, the heterodimer glycoprotein H-glycoprotein L is required for the fusion of viral and plasma membranes leading to virus entry into the host cell. Following initial binding to host receptor, membrane fusion is mediated by the fusion machinery composed of gB and the heterodimer gH/gL. May also be involved in the fusion between the virion envelope and the outer nuclear membrane during virion morphogenesis. The heterodimer gH/gL targets also host EPHA2 to promote viral entry. This chain is Envelope glycoprotein H, found in Homo sapiens (Human).